The sequence spans 447 residues: MPFLIMLLFVGAIGFQVSFVSRSTTWDMSIAGWVLTGVFILYTAFGLFSNRLPSQMADIIWLYGTATSFSKVVYSVLFFSVTWKALLWIISAIFGDVLIVLLSGDHINLLGRSIIFVGLFFIAEVWLMSVSCARTVKKMKRVYVLVFLLMLGIYSICLYRFFFLQHSSGIWESIARFISGVGLVFDTLSPLYVVVFIGIITVSFMTIAFTSRQVEMKESLVKEAEFWEEFQERQFGSGQIIQKPKTTWWGLQGLNGIWSFLWLELLLFKKYLFFHSIHTVMLSGVFYVVIFMYPEWFYLLFFLIVSAVMLSSYYSGIVRHSQSGTLHLFPGALWKKIIILELTNTVWLYILYCVSITFMAVGNLVYWYIYGLGIYIWFMTIRLFAFTHTNRNDIKLSLPQYYKSFFMALGLSGICLYVIHLLTADWYTLVVVVCIGSLSWCLFYRFR.

Over 1 to 3 (MPF) the chain is Cytoplasmic. Residues 4-22 (LIMLLFVGAIGFQVSFVSR) form a helical membrane-spanning segment. The Extracellular segment spans residues 23–29 (STTWDMS). Residues 30-50 (IAGWVLTGVFILYTAFGLFSN) traverse the membrane as a helical segment. At 51-59 (RLPSQMADI) the chain is on the cytoplasmic side. A helical membrane pass occupies residues 60-80 (IWLYGTATSFSKVVYSVLFFS). Residues 81–85 (VTWKA) lie on the Extracellular side of the membrane. Residues 86–104 (LLWIISAIFGDVLIVLLSG) traverse the membrane as a helical segment. Topologically, residues 105–113 (DHINLLGRS) are cytoplasmic. Residues 114–134 (IIFVGLFFIAEVWLMSVSCAR) traverse the membrane as a helical segment. Residues 135–141 (TVKKMKR) lie on the Extracellular side of the membrane. Residues 142 to 160 (VYVLVFLLMLGIYSICLYR) traverse the membrane as a helical segment. At 161–189 (FFFLQHSSGIWESIARFISGVGLVFDTLS) the chain is on the cytoplasmic side. The helical transmembrane segment at 190–208 (PLYVVVFIGIITVSFMTIA) threads the bilayer. Residues 209–247 (FTSRQVEMKESLVKEAEFWEEFQERQFGSGQIIQKPKTT) lie on the Extracellular side of the membrane. A helical transmembrane segment spans residues 248-268 (WWGLQGLNGIWSFLWLELLLF). Residues 269-297 (KKYLFFHSIHTVMLSGVFYVVIFMYPEWF) are Cytoplasmic-facing. The helical transmembrane segment at 298–318 (YLLFFLIVSAVMLSSYYSGIV) threads the bilayer. At 319–341 (RHSQSGTLHLFPGALWKKIIILE) the chain is on the extracellular side. A helical membrane pass occupies residues 342–360 (LTNTVWLYILYCVSITFMA). Residues 361–363 (VGN) lie on the Cytoplasmic side of the membrane. Residues 364 to 382 (LVYWYIYGLGIYIWFMTIR) traverse the membrane as a helical segment. Residues 383–404 (LFAFTHTNRNDIKLSLPQYYKS) lie on the Extracellular side of the membrane. The helical transmembrane segment at 405-423 (FFMALGLSGICLYVIHLLT) threads the bilayer. Residues 424–426 (ADW) are Cytoplasmic-facing. The helical transmembrane segment at 427–447 (YTLVVVVCIGSLSWCLFYRFR) threads the bilayer.

Its subcellular location is the cell membrane. Functionally, probably part of the ABC transporter SkfEF involved in the export of the bacteriocin SKF. Probably responsible for the translocation of bacteriocin SkfA across the membrane. The sequence is that of Putative bacteriocin-SkfA transport system permease protein SkfF from Bacillus subtilis (strain 168).